A 244-amino-acid polypeptide reads, in one-letter code: Small ribosomal subunit protein uS3 (244 aa).

In terms of domain architecture, KH type-2 spans 39 to 110 (IRDYVRKNLS…QIRINVIEVE (72 aa)). Positions 215-244 (EDAAPSNVGQPRRRNQQRRRQQFEDRSNEG) are disordered. Over residues 225–234 (PRRRNQQRRR) the composition is skewed to basic residues. Residues 235 to 244 (QQFEDRSNEG) are compositionally biased toward basic and acidic residues.

Belongs to the universal ribosomal protein uS3 family. As to quaternary structure, part of the 30S ribosomal subunit. Forms a tight complex with proteins S10 and S14.

Binds the lower part of the 30S subunit head. Binds mRNA in the 70S ribosome, positioning it for translation. This chain is Small ribosomal subunit protein uS3, found in Synechococcus sp. (strain ATCC 27144 / PCC 6301 / SAUG 1402/1) (Anacystis nidulans).